The primary structure comprises 381 residues: uncharacterized protein (381 aa).

Positions 1–16 (MQTLLFYFFFINLIFA) are cleaved as a signal peptide. The Lumenal portion of the chain corresponds to 17–303 (HDLNVKTYKP…KILENSPCPN (287 aa)). Residues Cys-118 and Cys-149 are joined by a disulfide bond. N-linked (GlcNAc...) asparagine glycans are attached at residues Asn-133, Asn-192, Asn-225, Asn-243, Asn-246, and Asn-287. The chain crosses the membrane as a helical span at residues 304 to 324 (QPSIQPFGILMMLVSTIYGNF). Residues 325–359 (KNLYNCIKRNTIGYIYNSIYDFWITEGMLFPMRNM) lie on the Cytoplasmic side of the membrane. Residues 360–380 (DIFKITAISIGLSIPVFLWLL) traverse the membrane as a helical segment. Lys-381 is a topological domain (lumenal).

This sequence belongs to the calreticulin family.

The protein resides in the endoplasmic reticulum membrane. This is an uncharacterized protein from Schizosaccharomyces pombe (strain 972 / ATCC 24843) (Fission yeast).